The following is an 81-amino-acid chain: MSDPFANPDQTLDTQGLRCPEPVMMVRKTVRHMQDGETLLIIADDPATTRDIPGFCRFMEHTLVAQAVDALPYQYLLKKGL.

Cys19 (cysteine persulfide intermediate) is an active-site residue.

It belongs to the sulfur carrier protein TusA family. In terms of assembly, interacts with IscS.

The protein localises to the cytoplasm. It functions in the pathway tRNA modification. Functionally, sulfur carrier protein involved in sulfur trafficking in the cell. Part of a sulfur-relay system required for 2-thiolation during synthesis of 2-thiouridine of the modified wobble base 5-methylaminomethyl-2-thiouridine (mnm(5)s(2)U) in tRNA. Interacts with IscS and stimulates its cysteine desulfurase activity. Accepts an activated sulfur from IscS, which is then transferred to TusD, and thus determines the direction of sulfur flow from IscS to 2-thiouridine formation. Also appears to be involved in sulfur transfer for the biosynthesis of molybdopterin. This chain is Sulfur carrier protein TusA, found in Erwinia tasmaniensis (strain DSM 17950 / CFBP 7177 / CIP 109463 / NCPPB 4357 / Et1/99).